Reading from the N-terminus, the 168-residue chain is Ribosome maturation factor RimM (168 aa).

A PRC barrel domain is found at 96 to 168 (EGDYYWTDLI…IIVVEWDADF (73 aa)).

The protein belongs to the RimM family. Binds ribosomal protein uS19.

The protein localises to the cytoplasm. Functionally, an accessory protein needed during the final step in the assembly of 30S ribosomal subunit, possibly for assembly of the head region. Essential for efficient processing of 16S rRNA. May be needed both before and after RbfA during the maturation of 16S rRNA. It has affinity for free ribosomal 30S subunits but not for 70S ribosomes. In Coxiella burnetii (strain Dugway 5J108-111), this protein is Ribosome maturation factor RimM.